A 303-amino-acid polypeptide reads, in one-letter code: 2-phospho-L-lactate transferase (303 aa).

7,8-didemethyl-8-hydroxy-5-deazariboflavin-binding residues include D48 and K87.

The protein belongs to the CofD family. As to quaternary structure, homodimer. Requires Mg(2+) as cofactor.

It catalyses the reaction (2S)-lactyl-2-diphospho-5'-guanosine + 7,8-didemethyl-8-hydroxy-5-deazariboflavin = oxidized coenzyme F420-0 + GMP + H(+). It functions in the pathway cofactor biosynthesis; coenzyme F420 biosynthesis. In terms of biological role, catalyzes the transfer of the 2-phospholactate moiety from (2S)-lactyl-2-diphospho-5'-guanosine to 7,8-didemethyl-8-hydroxy-5-deazariboflavin (FO) with the formation of oxidized coenzyme F420-0 and GMP. The chain is 2-phospho-L-lactate transferase from Methanosarcina mazei (strain ATCC BAA-159 / DSM 3647 / Goe1 / Go1 / JCM 11833 / OCM 88) (Methanosarcina frisia).